The primary structure comprises 566 residues: Glutamate--tRNA ligase (566 aa).

Positions 104 to 114 match the 'HIGH' region motif; it reads PNPDGPLHLGN.

Belongs to the class-I aminoacyl-tRNA synthetase family. Glutamate--tRNA ligase type 2 subfamily.

It localises to the cytoplasm. It carries out the reaction tRNA(Glu) + L-glutamate + ATP = L-glutamyl-tRNA(Glu) + AMP + diphosphate. In terms of biological role, catalyzes the attachment of glutamate to tRNA(Glu) in a two-step reaction: glutamate is first activated by ATP to form Glu-AMP and then transferred to the acceptor end of tRNA(Glu). This is Glutamate--tRNA ligase from Metallosphaera sedula (strain ATCC 51363 / DSM 5348 / JCM 9185 / NBRC 15509 / TH2).